A 229-amino-acid polypeptide reads, in one-letter code: Ribosome maturation factor RimM (229 aa).

The segment at 1–21 (MAGHDSGNAKRGRSPSFGVFV) is disordered. Residues 148–229 (ADEFYWVDLI…RVVVDWEADY (82 aa)) enclose the PRC barrel domain.

Belongs to the RimM family. Binds ribosomal protein uS19.

It localises to the cytoplasm. An accessory protein needed during the final step in the assembly of 30S ribosomal subunit, possibly for assembly of the head region. Essential for efficient processing of 16S rRNA. May be needed both before and after RbfA during the maturation of 16S rRNA. It has affinity for free ribosomal 30S subunits but not for 70S ribosomes. This Burkholderia mallei (strain NCTC 10247) protein is Ribosome maturation factor RimM.